The primary structure comprises 333 residues: 2-haloacrylate reductase (333 aa).

Position 153–159 (153–159) interacts with NADP(+); it reads AAAGGMG.

The protein belongs to the zinc-containing alcohol dehydrogenase family.

The catalysed reaction is (S)-2-chloropropanoate + NADP(+) = 2-chloroacrylate + NADPH + H(+). In terms of biological role, involved in the degradation of unsaturated organohalogen compounds. Catalyzes the NADPH-dependent reduction of the carbon-carbon double bond of 2-chloroacrylate to produce (S)-2-chloropropionate, which is probably further metabolized to (R)-lactate by (S)-2-haloacid dehalogenase. Can also use 2-bromoacrylate as substrate. Does not act on acrylate, methacrylate, 1,4-benzoquinone and 1,4-naphthoquinone. This is 2-haloacrylate reductase from Burkholderia sp.